The primary structure comprises 388 residues: tRNA(Ile)-lysidine synthase (388 aa).

51–56 (SGGRDS) contacts ATP.

Belongs to the tRNA(Ile)-lysidine synthase family.

The protein resides in the cytoplasm. The enzyme catalyses cytidine(34) in tRNA(Ile2) + L-lysine + ATP = lysidine(34) in tRNA(Ile2) + AMP + diphosphate + H(+). Its function is as follows. Ligates lysine onto the cytidine present at position 34 of the AUA codon-specific tRNA(Ile) that contains the anticodon CAU, in an ATP-dependent manner. Cytidine is converted to lysidine, thus changing the amino acid specificity of the tRNA from methionine to isoleucine. This Bifidobacterium longum (strain NCC 2705) protein is tRNA(Ile)-lysidine synthase.